A 116-amino-acid polypeptide reads, in one-letter code: Large ribosomal subunit protein bL20 (116 aa).

The protein belongs to the bacterial ribosomal protein bL20 family.

Functionally, binds directly to 23S ribosomal RNA and is necessary for the in vitro assembly process of the 50S ribosomal subunit. It is not involved in the protein synthesizing functions of that subunit. The sequence is that of Large ribosomal subunit protein bL20 from Picosynechococcus sp. (strain ATCC 27264 / PCC 7002 / PR-6) (Agmenellum quadruplicatum).